We begin with the raw amino-acid sequence, 277 residues long: Caspase-3 (277 aa).

Residue Met1 is modified to N-acetylmethionine. Propeptides lie at residues 1–9 (MENNETSVD) and 10–28 (AKSIKNLETQTIHGSKSMD). Position 11 is an N6-acetyllysine (Lys11). Ser26 is modified (phosphoserine). Active-site residues include His121 and Cys163. Cys163 carries the S-nitrosocysteine; in inhibited form modification.

It belongs to the peptidase C14A family. As to quaternary structure, heterotetramer that consists of two anti-parallel arranged heterodimers, each one formed by a 17 kDa (p17) and a 12 kDa (p12) subunit. Interacts with BIRC6/bruce. Cleavage by granzyme B, caspase-6, caspase-8 and caspase-10 generates the two active subunits. Additional processing of the propeptides is likely due to the autocatalytic activity of the activated protease. Active heterodimers between the small subunit of caspase-7 protease and the large subunit of caspase-3 also occur and vice versa. In terms of processing, S-nitrosylated on its catalytic site cysteine in unstimulated cell lines and denitrosylated upon activation of the Fas apoptotic pathway, associated with an increase in intracellular caspase activity. Fas therefore activates caspase-3 not only by inducing the cleavage of the caspase zymogen to its active subunits, but also by stimulating the denitrosylation of its active site thiol. Post-translationally, ubiquitinated by BIRC6; this activity is inhibited by DIABLO/SMAC.

The protein resides in the cytoplasm. The catalysed reaction is Strict requirement for an Asp residue at positions P1 and P4. It has a preferred cleavage sequence of Asp-Xaa-Xaa-Asp-|- with a hydrophobic amino-acid residue at P2 and a hydrophilic amino-acid residue at P3, although Val or Ala are also accepted at this position.. Its activity is regulated as follows. Inhibited by BIRC6; following inhibition of BIRC6-caspase binding by DIABLO/SMAC, BIRC6 is subjected to caspase cleavage, leading to an increase in active caspases. In terms of biological role, involved in the activation cascade of caspases responsible for apoptosis execution. At the onset of apoptosis, it proteolytically cleaves poly(ADP-ribose) polymerase PARP1 at a '216-Asp-|-Gly-217' bond. Cleaves and activates sterol regulatory element binding proteins (SREBPs) between the basic helix-loop-helix leucine zipper domain and the membrane attachment domain. Cleaves and activates caspase-6, -7 and -9 (CASP6, CASP7 and CASP9, respectively). Cleaves and inactivates interleukin-18 (IL18). Triggers cell adhesion in sympathetic neurons through RET cleavage. Cleaves IL-1 beta between an Asp and an Ala, releasing the mature cytokine which is involved in a variety of inflammatory processes. Cleaves and inhibits serine/threonine-protein kinase AKT1 in response to oxidative stress. Acts as an inhibitor of type I interferon production during virus-induced apoptosis by mediating cleavage of antiviral proteins CGAS, IRF3 and MAVS, thereby preventing cytokine overproduction. Also involved in pyroptosis by mediating cleavage and activation of gasdermin-E (GSDME). Cleaves XRCC4 and phospholipid scramblase proteins XKR4, XKR8 and XKR9, leading to promote phosphatidylserine exposure on apoptotic cell surface. Cleaves BIRC6 following inhibition of BIRC6-caspase binding by DIABLO/SMAC. The sequence is that of Caspase-3 (CASP3) from Oryctolagus cuniculus (Rabbit).